Consider the following 192-residue polypeptide: T-cell surface glycoprotein CD3 epsilon chain (192 aa).

The N-terminal stretch at 1-21 (MQSGNLWRALGLCLLLVGAWA) is a signal peptide. Topologically, residues 23–114 (DADEQKPYEV…QNCMEVNLME (92 aa)) are extracellular. The Ig-like domain maps to 26-97 (EQKPYEVSIS…EGNKEAAHTL (72 aa)). Cysteines 43 and 84 form a disulfide. A glycan (N-linked (GlcNAc...) asparagine) is linked at N72. A helical membrane pass occupies residues 115–135 (VATIIVVDICVTLGLLLLVYY). The Cytoplasmic portion of the chain corresponds to 136–192 (WSKSRKAKASPMTRGAGAGGRPRGQNKGRPPPVPNPDYEPIRKGQRDLYAGLNQRGV). The segment at 145 to 180 (SPMTRGAGAGGRPRGQNKGRPPPVPNPDYEPIRKGQ) is disordered. Residues 160–177 (QNKGRPPPVPNPDYEPIR) are NUMB-binding region. Residues 163–190 (GRPPPVPNPDYEPIRKGQRDLYAGLNQR) form the ITAM domain. The interval 164 to 171 (RPPPVPNP) is proline-rich sequence. Phosphotyrosine occurs at positions 173 and 184.

The TCR-CD3 complex is composed of a CD3D/CD3E and a CD3G/CD3E heterodimers that preferentially associate with TCRalpha and TCRbeta, respectively, to form TCRalpha/CD3E/CD3G and TCRbeta/CD3G/CD3E trimers. In turn, the hexamer interacts with CD3Z homodimer to form the TCR-CD3 complex. Alternatively, TCRalpha and TCRbeta can be replaced by TCRgamma and TCRdelta. Interacts with CD6. Interacts (via Proline-rich sequence) with NCK1; the interaction is ligand dependent but independent of tyrosine kinase activation. Phosphorylated on Tyr residues after T-cell receptor triggering by LCK in association with CD4/CD8.

Its subcellular location is the cell membrane. Functionally, part of the TCR-CD3 complex present on T-lymphocyte cell surface that plays an essential role in adaptive immune response. When antigen presenting cells (APCs) activate T-cell receptor (TCR), TCR-mediated signals are transmitted across the cell membrane by the CD3 chains CD3D, CD3E, CD3G and CD3Z. All CD3 chains contain immunoreceptor tyrosine-based activation motifs (ITAMs) in their cytoplasmic domain. Upon TCR engagement, these motifs become phosphorylated by Src family protein tyrosine kinases LCK and FYN, resulting in the activation of downstream signaling pathways. In addition of this role of signal transduction in T-cell activation, CD3E plays an essential role in correct T-cell development. Also participates in internalization and cell surface down-regulation of TCR-CD3 complexes via endocytosis sequences present in CD3E cytosolic region. In addition to its role as a TCR coreceptor, it serves as a receptor for ITPRIPL1. Ligand recognition inhibits T-cell activation by promoting interaction with NCK1, which prevents CD3E-ZAP70 interaction and blocks the ERK-NFkB signaling cascade and calcium influx. The sequence is that of T-cell surface glycoprotein CD3 epsilon chain (CD3E) from Bos taurus (Bovine).